The following is a 108-amino-acid chain: Complement inhibitor CirpT4 (108 aa).

Residues 1-19 (MRAFVALFCTLVAFATVIC) form the signal peptide. 4 disulfides stabilise this stretch: cysteine 40–cysteine 64, cysteine 59–cysteine 98, cysteine 76–cysteine 99, and cysteine 85–cysteine 104.

It belongs to the CirpT family. Expressed in salivary glands.

The protein resides in the secreted. Its function is as follows. Complement inhibitor. Prevents complement-mediated activation of C5 by sterically preventing direct binding of C5 to its convertase (binding with domains MG4 and MG5). Binds C5 at a different binding site than the other tick complement inhibitors OmCI and RaCI3, and the drug eculizumab. Inhibits the complement in human, rat and guinea pig, and also shows a reduced inhibition in rabbit and pig. The polypeptide is Complement inhibitor CirpT4 (Amblyomma americanum (Lone star tick)).